Consider the following 152-residue polypeptide: NADH-quinone oxidoreductase subunit A 2 (152 aa).

3 helical membrane passes run 8–28 (FGKV…GYVS), 63–83 (FYVV…LFPW), and 90–110 (LGGF…LGLV).

It belongs to the complex I subunit 3 family. NDH-1 is composed of 14 different subunits. Subunits NuoA, H, J, K, L, M, N constitute the membrane sector of the complex.

The protein localises to the cell inner membrane. It catalyses the reaction a quinone + NADH + 5 H(+)(in) = a quinol + NAD(+) + 4 H(+)(out). In terms of biological role, NDH-1 shuttles electrons from NADH, via FMN and iron-sulfur (Fe-S) centers, to quinones in the respiratory chain. The immediate electron acceptor for the enzyme in this species is believed to be a menaquinone. Couples the redox reaction to proton translocation (for every two electrons transferred, four hydrogen ions are translocated across the cytoplasmic membrane), and thus conserves the redox energy in a proton gradient. This Chloroherpeton thalassium (strain ATCC 35110 / GB-78) protein is NADH-quinone oxidoreductase subunit A 2.